A 213-amino-acid chain; its full sequence is N-(5'-phosphoribosyl)anthranilate isomerase (213 aa).

The protein belongs to the TrpF family.

It carries out the reaction N-(5-phospho-beta-D-ribosyl)anthranilate = 1-(2-carboxyphenylamino)-1-deoxy-D-ribulose 5-phosphate. It participates in amino-acid biosynthesis; L-tryptophan biosynthesis; L-tryptophan from chorismate: step 3/5. This Methanocella arvoryzae (strain DSM 22066 / NBRC 105507 / MRE50) protein is N-(5'-phosphoribosyl)anthranilate isomerase.